We begin with the raw amino-acid sequence, 264 residues long: Thiazole synthase (264 aa).

K106 serves as the catalytic Schiff-base intermediate with DXP. 1-deoxy-D-xylulose 5-phosphate-binding positions include G167, 193-194 (AG), and 215-216 (NS).

Belongs to the ThiG family. Homotetramer. Forms heterodimers with either ThiH or ThiS.

Its subcellular location is the cytoplasm. The enzyme catalyses [ThiS sulfur-carrier protein]-C-terminal-Gly-aminoethanethioate + 2-iminoacetate + 1-deoxy-D-xylulose 5-phosphate = [ThiS sulfur-carrier protein]-C-terminal Gly-Gly + 2-[(2R,5Z)-2-carboxy-4-methylthiazol-5(2H)-ylidene]ethyl phosphate + 2 H2O + H(+). It functions in the pathway cofactor biosynthesis; thiamine diphosphate biosynthesis. Its function is as follows. Catalyzes the rearrangement of 1-deoxy-D-xylulose 5-phosphate (DXP) to produce the thiazole phosphate moiety of thiamine. Sulfur is provided by the thiocarboxylate moiety of the carrier protein ThiS. In vitro, sulfur can be provided by H(2)S. The polypeptide is Thiazole synthase (Prochlorococcus marinus (strain MIT 9301)).